The following is a 635-amino-acid chain: Sodium-dependent multivitamin transporter (635 aa).

The next 3 helical transmembrane spans lie at 24–44 (FSIMDYVVFVLLLVLSLAIGL), 68–88 (CLPVALSLLATFQSAVAILGV), and 101–121 (FLGCCYFLGLLIPAHIFIPVF). N138 carries an N-linked (GlcNAc...) asparagine glycan. The next 9 helical transmembrane spans lie at 143–163 (VCGTVTFIFQMVIYMGVVLYA), 176–196 (LWLSVLALGIVCTVYTALGGL), 199–219 (VIWTDVFQTLVMFLGQLAVII), 256–276 (FWTLAFGGVFMMLSLYGVNQA), 297–317 (VFPFQQVSLCVGCLIGLVMFA), 336–356 (FVLYFVMDLLKGLPGLPGLFI), 396–416 (IMLSRGLAFGYGLLCLGMAYI), 428–448 (ISIFGMVGGPLLGLFCLGMFF), and 456–476 (AVVGLLAGLVMAFWIGIGSIV). Residues N489 and N498 are each glycosylated (N-linked (GlcNAc...) asparagine). The chain crosses the membrane as a helical span at residues 528 to 548 (LWYSAHNSTTVIVVGLIVSLL).

This sequence belongs to the sodium:solute symporter (SSF) (TC 2.A.21) family. In terms of assembly, interacts with PDZD11. In terms of processing, may be glycosylated. As to expression, expressed in microvessels of the brain (at protein level). Expressed in heart, brain, placenta, lung, liver, skeletal muscle, kidney, and pancreas.

It is found in the cell membrane. It localises to the apical cell membrane. The catalysed reaction is biotin(out) + 2 Na(+)(out) = biotin(in) + 2 Na(+)(in). It carries out the reaction (R)-pantothenate(out) + 2 Na(+)(out) = (R)-pantothenate(in) + 2 Na(+)(in). It catalyses the reaction (R)-lipoate(out) + 2 Na(+)(out) = (R)-lipoate(in) + 2 Na(+)(in). The enzyme catalyses iodide(out) + 2 Na(+)(out) = iodide(in) + 2 Na(+)(in). Sodium-dependent multivitamin transporter that mediates the electrogenic transport of pantothenate, biotin, lipoate and iodide. Functions as a Na(+)-coupled substrate symporter where the stoichiometry of Na(+):substrate is 2:1, creating an electrochemical Na(+) gradient used as driving force for substrate uptake. Required for biotin and pantothenate uptake in the intestine across the brush border membrane. Plays a role in the maintenance of intestinal mucosa integrity, by providing the gut mucosa with biotin. Contributes to the luminal uptake of biotin and pantothenate into the brain across the blood-brain barrier. This chain is Sodium-dependent multivitamin transporter, found in Homo sapiens (Human).